We begin with the raw amino-acid sequence, 593 residues long: ATP-dependent lipid A-core flippase (593 aa).

Helical transmembrane passes span 33-53 (IGIV…EAGI), 75-95 (WYVP…QYTS), 137-157 (AIVF…VTLV), 164-184 (IFLL…VAVI), 262-282 (QPLT…IAVV), and 292-312 (GGFV…KHLI). The ABC transmembrane type-1 domain maps to 37–320 (VLAVVTMGVV…LIDVNQPLQR (284 aa)). The ABC transporter domain maps to 352–586 (IEFRAVSFDY…GGLYAHLHRI (235 aa)). ATP is bound at residue 386 to 393 (GPSGSGKT).

Belongs to the ABC transporter superfamily. Lipid exporter (TC 3.A.1.106) family. As to quaternary structure, homodimer.

It is found in the cell inner membrane. It carries out the reaction ATP + H2O + lipid A-core oligosaccharideSide 1 = ADP + phosphate + lipid A-core oligosaccharideSide 2.. Functionally, involved in lipopolysaccharide (LPS) biosynthesis. Translocates lipid A-core from the inner to the outer leaflet of the inner membrane. Transmembrane domains (TMD) form a pore in the inner membrane and the ATP-binding domain (NBD) is responsible for energy generation. This is ATP-dependent lipid A-core flippase from Burkholderia orbicola (strain AU 1054).